The primary structure comprises 401 residues: Glycerol-1-phosphate dehydrogenase [NAD(P)+] (401 aa).

Residues Asp-57, 118–122, and 140–143 each bind NAD(+); these read GTIHD and TAPS. Asp-145 is a binding site for substrate. Ser-149 serves as a coordination point for NAD(+). Residue Asp-192 participates in substrate binding. The Ni(2+) site is built by Asp-192 and His-272. A substrate-binding site is contributed by His-276. His-292 serves as a coordination point for Ni(2+).

This sequence belongs to the glycerol-1-phosphate dehydrogenase family. Homodimer. Requires Ni(2+) as cofactor.

It is found in the cytoplasm. The enzyme catalyses sn-glycerol 1-phosphate + NAD(+) = dihydroxyacetone phosphate + NADH + H(+). The catalysed reaction is sn-glycerol 1-phosphate + NADP(+) = dihydroxyacetone phosphate + NADPH + H(+). Functionally, catalyzes the NAD(P)H-dependent reduction of dihydroxyacetonephosphate (DHAP or glycerone phosphate) to glycerol 1-phosphate (G1P). The G1P thus generated is probably used for the synthesis of phosphoglycerolipids in Gram-positive bacterial species. The sequence is that of Glycerol-1-phosphate dehydrogenase [NAD(P)+] from Bacillus licheniformis (strain ATCC 14580 / DSM 13 / JCM 2505 / CCUG 7422 / NBRC 12200 / NCIMB 9375 / NCTC 10341 / NRRL NRS-1264 / Gibson 46).